A 228-amino-acid polypeptide reads, in one-letter code: Vesicle transport protein SEC20 (228 aa).

Over 1–199 (MAAPQDVHVR…LITKYNRREL (199 aa)) the chain is Cytoplasmic. Positions 37–90 (LSALTELNTKVKEKFQQLRHRIQDLEQLAKEQDKESEKQLLLQEVENHKKQMLS) form a coiled coil. The chain crosses the membrane as a helical; Anchor for type IV membrane protein span at residues 200–220 (TDKLLIFLALALFLATVLYIV). At 221 to 228 (KKRLFPFL) the chain is on the lumenal side.

The protein belongs to the SEC20 family. As to quaternary structure, component of a SNARE complex consisting of STX18, USE1L, BNIP1/SEC20L and SEC22B. Interacts directly with STX18, RINT1/TIP20L and NAPA. Interacts with ZW10 through RINT1. Interacts with BCL2. Interacts with RNF186. Interacts with RNF185. Interacts with SQSTM1; increased by 'Lys-63'-linked polyubiquitination of BNIP1. (Microbial infection) Interacts with adenovirus E1B 19K protein; plays a role in the suppression of cell apoptosis by the viral protein. Polyubiquitinated. 'Lys-63'-linked polyubiquitination by RNF185 increases the interaction with the autophagy receptor SQSTM1. Undergoes 'Lys-29'- and 'Lys-63'-linked polyubiquitination by RNF186 that may regulate BNIP1 localization to the mitochondrion. Isoform 1 is highly expressed in heart, brain, liver skeletal muscle and pancreas. Isoform 3 is moderately expressed in placenta, lung and kidney. Isoform 4 is highly expressed in testis and small intestine.

Its subcellular location is the endoplasmic reticulum membrane. It is found in the mitochondrion membrane. In terms of biological role, as part of a SNARE complex may be involved in endoplasmic reticulum membranes fusion and be required for the maintenance of endoplasmic reticulum organization. Also plays a role in apoptosis. It is for instance required for endoplasmic reticulum stress-induced apoptosis. As a substrate of RNF185 interacting with SQSTM1, might also be involved in mitochondrial autophagy. The polypeptide is Vesicle transport protein SEC20 (BNIP1) (Homo sapiens (Human)).